A 99-amino-acid chain; its full sequence is HssA/B-like protein 41 (99 aa).

A disordered region spans residues 1–29 (MTLFSSISSISNPMTSSKSSISSFGSGTS).

It belongs to the hssA/B family.

The chain is HssA/B-like protein 41 (hssl41) from Dictyostelium discoideum (Social amoeba).